We begin with the raw amino-acid sequence, 819 residues long: MASGSVQSSSGNGRRQAAVVDEFTVPGDKRSLLEKSRPRIQALFPVLFTVLGSLETFQQSEVKEDEEKPGRIWLQLKGEKQAVRRAKEYVKGICEPELEEKQSYPKEMHCIFAGAQSSFLNHLIQDTCADVALSDIGVLGIKGATEPVVMAQSRVQQFIALFKDNLSLPSHKEPAVKKKFKLYVEKHVDKYTVDLLLLPSALKSELLSLACDNQLSCEDLSRQSSDDKAECKVNQKDEVSRKGAGTPVTELTSQLDSVFSSAAEDSPCLIECPYSEQDRLSVKRRSSEAEERFSKKPFSLEAVQVDGPVNRNADKNNVPIIDLISEPSDFEDSVIVVEADDCVSSETEYKILVNFFKTMGYSQIVVEKVIDDLGQSEEPLKLLEEIEKQSKKELSVPFSQSSSYSTDLLKARGTSSLPKCKIAIAETVQSAAPSKVQPKALLATDKAGPSNPFCYKSQTKATVVNPIPTDQTTIVAPAERAFNNHFDPPLTGVQIFQNSLKVQYRLELKNEPGRWDLKHIIIDGSNVAMSHGLQRFFSCRGIALAVEYFWKKGHRNITVFVPQWRTKRDPFITEQHFLQQLQELGILSFTPSRTVLGARIASHDDRFLLHLAERTGGIIITNDNFREFVVESPSWREIIKERLLQYTFAGDIFMLPDDPLGRYGPKLDDFLSKQPNNRTVHSSFPSSNERFVPRDQFAPPRNMAPKTGLNQPMAPRAGHNQPMAPRAGHNQPMAPRTGLSQHRFLQLIKPQEPFTPALHNIARPCPIMPPERSPSETMQLKEALLKIFPEADQRHKINEILTAHPFMRDLNALSAMVLD.

A compositionally biased stretch (polar residues) spans 1-13; that stretch reads MASGSVQSSSGNG. Residues 1–20 form a disordered region; sequence MASGSVQSSSGNGRRQAAVV. One can recognise a KH-like domain in the interval 80 to 164; sequence KQAVRRAKEY…VQQFIALFKD (85 aa). The segment covering 226–241 has biased composition (basic and acidic residues); the sequence is DDKAECKVNQKDEVSR. Disordered stretches follow at residues 226 to 247 and 666 to 736; these read DDKA…AGTP and KLDD…MAPR. One can recognise an RNase NYN domain in the interval 517-669; it reads LKHIIIDGSN…LGRYGPKLDD (153 aa). Over residues 673–689 the composition is skewed to polar residues; the sequence is KQPNNRTVHSSFPSSNE. Positions 772-819 are coCUN; sequence RSPSETMQLKEALLKIFPEADQRHKINEILTAHPFMRDLNALSAMVLD.

It belongs to the N4BP1 family.

The protein localises to the cytoplasm. The protein resides in the cytosol. It is found in the nucleus. Its subcellular location is the nucleolus. It localises to the PML body. In terms of biological role, potent suppressor of cytokine production that acts as a regulator of innate immune signaling and inflammation. Acts as a key negative regulator of select cytokine and chemokine responses elicited by TRIF-independent Toll-like receptors (TLRs), thereby limiting inflammatory cytokine responses to minor insults. Has ribonuclease activity. This Xenopus tropicalis (Western clawed frog) protein is NEDD4-binding protein 1.